We begin with the raw amino-acid sequence, 336 residues long: Ferrochelatase (336 aa).

The Fe cation site is built by histidine 206 and glutamate 287.

This sequence belongs to the ferrochelatase family.

It localises to the cytoplasm. It carries out the reaction heme b + 2 H(+) = protoporphyrin IX + Fe(2+). The protein operates within porphyrin-containing compound metabolism; protoheme biosynthesis; protoheme from protoporphyrin-IX: step 1/1. Its function is as follows. Catalyzes the ferrous insertion into protoporphyrin IX. This chain is Ferrochelatase, found in Neisseria meningitidis serogroup A / serotype 4A (strain DSM 15465 / Z2491).